The primary structure comprises 527 residues: Transcription factor RBF1 (527 aa).

Disordered stretches follow at residues 1 to 36 (MSSN…IGAS), 258 to 281 (ANLY…HNEE), 328 to 365 (HHLL…QQAA), 395 to 433 (QLSQ…HGLD), and 470 to 527 (TQGN…SGFL). The DNA-binding element occupies 160-300 (HVRDALTTDE…LRMINPQHNH (141 aa)). Residues 263 to 281 (NEKDQKRKNKPDEPGHNEE) show a composition bias toward basic and acidic residues. 2 stretches are compositionally biased toward low complexity: residues 332–365 (QQEQ…QQAA) and 395–428 (QLSQ…PQQT).

This sequence belongs to the RBF1 family.

The protein resides in the nucleus. It is found in the chromosome. Its subcellular location is the telomere. Its function is as follows. Transcriptional activator that binds to the RPG box and to telomeres. Involved in the regulation of the transition between yeast and filamentous forms and plays a role in virulence. Induces expression of HWP1, a major hyphal cell protein and virulence factor. The chain is Transcription factor RBF1 (RBF1) from Candida albicans (Yeast).